A 1562-amino-acid polypeptide reads, in one-letter code: Pikromycin polyketide synthase component PikAIII (1562 aa).

Positions histidine 34–glutamate 464 constitute a Ketosynthase family 3 (KS3) domain. The segment at valine 37–histidine 1475 is module 5. The Acyl-thioester intermediate; for beta-ketoacyl synthase activity role is filled by cysteine 209. Residues histidine 344 and histidine 384 each act as for beta-ketoacyl synthase activity in the active site. The acyltransferase stretch occupies residues phenylalanine 565–leucine 866. Serine 655 acts as the Acyl-ester intermediate; for acyltransferase activity in catalysis. Positions glycine 1116–alanine 1293 are beta-ketoacyl reductase. NADP(+)-binding positions include threonine 1124–leucine 1127, serine 1147–glycine 1150, aspartate 1176–valine 1177, lysine 1226, and tyrosine 1248–serine 1249. The active-site Acyl-ester intermediate; for beta-ketoacyl reductase activity is the tyrosine 1263. The region spanning proline 1403–tyrosine 1478 is the Carrier domain. Serine 1438 carries the post-translational modification O-(pantetheine 4'-phosphoryl)serine. The disordered stretch occupies residues glycine 1519–aspartate 1548. The span at glycine 1532–glutamate 1541 shows a compositional bias: low complexity.

As to quaternary structure, homodimer. Pikromycin PKS consists of a combination of multimodular (PikAI and PikAII) and monomodular (PikAIII and PikAIV) polypeptides each coding for a functional synthase subunit which participates in 1 (monomodular) or 2 (multimodular) of the six FAS-like elongation steps required for formation of the polyketide. Module 1, 2, 3, 4, 5, and 6 participating in biosynthesis steps 1, 2, 3, 4, 5, and 6, respectively. Pantetheine 4'-phosphate is required as a cofactor.

It carries out the reaction 5 (S)-methylmalonyl-CoA + malonyl-CoA + 5 NADPH + 11 H(+) = 10-deoxymethynolide + 6 CO2 + 5 NADP(+) + 6 CoA + 2 H2O. It catalyses the reaction 6 (S)-methylmalonyl-CoA + malonyl-CoA + 5 NADPH + 12 H(+) = narbonolide + 7 CO2 + 5 NADP(+) + 7 CoA + 2 H2O. It participates in antibiotic biosynthesis. Functionally, involved in the biosynthesis of 12- and 14-membered ring macrolactone antibiotics such as methymycin and neomethymycin, and pikromycin and narbomycin, respectively. Component of the pikromycin PKS which catalyzes the biosynthesis of both precursors 10-deoxymethynolide (12-membered ring macrolactone) and narbonolide (14-membered ring macrolactone). Chain elongation through PikAI, PikAII and PikAIII followed by thioesterase catalyzed termination results in the production of 10-deoxymethynolide, while continued elongation through PikAIV, followed by thioesterase (TE) catalyzed cyclization results in the biosynthesis of the narbonolide. This chain is Pikromycin polyketide synthase component PikAIII, found in Streptomyces venezuelae.